The chain runs to 474 residues: Variant surface glycoprotein MITAT 1.5 (474 aa).

An N-terminal signal peptide occupies residues 1 to 22; the sequence is MIHSNKVATVVLALISSWPADG. 2 disulfide bridges follow: Cys-37–Cys-161 and Cys-144–Cys-214. Asn-74 and Asn-95 each carry an N-linked (GlcNAc...) asparagine glycan. Asn-329 carries N-linked (GlcNAc...) asparagine glycosylation. A disordered region spans residues 388–449; it reads AKDGEGQKNQ…ETDEPDKEKC (62 aa). 2 stretches are compositionally biased toward basic and acidic residues: residues 414–423 and 435–449; these read TNKEACEKEN and KGKD…KEKC. Asn-451 carries the GPI-anchor amidated asparagine lipid modification. Residues 452–474 constitute a propeptide, removed in mature form; that stretch reads GSFLTSKQFAFSVVSAAFMALLF.

The protein resides in the cell membrane. Its function is as follows. VSG forms a coat on the surface of the parasite. The trypanosome evades the immune response of the host by expressing a series of antigenically distinct VSGs from an estimated 1000 VSG genes. The sequence is that of Variant surface glycoprotein MITAT 1.5 from Trypanosoma brucei brucei.